Consider the following 106-residue polypeptide: uncharacterized protein (106 aa).

The interval 1–23 (MASGAPPLTQKTPSHARRKERRR) is disordered. The span at 14-23 (SHARRKERRR) shows a compositional bias: basic residues.

This is an uncharacterized protein from Treponema pallidum (strain Nichols).